The chain runs to 293 residues: Histamine N-methyltransferase (293 aa).

Glutamate 28 provides a ligand contact to substrate. Positions 60, 89, 94, 120, and 142 each coordinate S-adenosyl-L-methionine. Asparagine 283 is a substrate binding site.

It belongs to the class I-like SAM-binding methyltransferase superfamily. HNMT family. Monomer.

It localises to the cytoplasm. The enzyme catalyses histamine + S-adenosyl-L-methionine = N(tau)-methylhistamine + S-adenosyl-L-homocysteine + H(+). Inactivates histamine by N-methylation. Plays an important role in degrading histamine and in regulating the airway response to histamine. This Xenopus tropicalis (Western clawed frog) protein is Histamine N-methyltransferase (hnmt).